The sequence spans 404 residues: Methionine aminopeptidase 1D, mitochondrial (404 aa).

A mitochondrion-targeting transit peptide spans 1–58; that stretch reads MNKILKNIINKSSINNVFKTSFNGGISSSSSSSSSYLNNNNNIIKSYNVQQKQQQRYY. Positions 86-109 are disordered; that stretch reads VRSQRLTKKTASPLEGMNRKERRK. Residue His232 coordinates substrate. The a divalent metal cation site is built by Asp249, Asp260, and His323. His330 lines the substrate pocket. 2 residues coordinate a divalent metal cation: Glu355 and Glu389.

This sequence belongs to the peptidase M24A family. Methionine aminopeptidase type 1 subfamily. Requires Co(2+) as cofactor. Zn(2+) is required as a cofactor. The cofactor is Mn(2+). Fe(2+) serves as cofactor.

It is found in the mitochondrion. The enzyme catalyses Release of N-terminal amino acids, preferentially methionine, from peptides and arylamides.. Its function is as follows. Removes the N-terminal methionine from nascent proteins. The N-terminal methionine is often cleaved when the second residue in the primary sequence is small and uncharged (Met-Ala-, Cys, Gly, Pro, Ser, Thr, or Val). In Dictyostelium discoideum (Social amoeba), this protein is Methionine aminopeptidase 1D, mitochondrial (metap1d).